The chain runs to 374 residues: Ribosomal RNA large subunit methyltransferase G (374 aa).

The protein belongs to the methyltransferase superfamily. RlmG family.

The protein resides in the cytoplasm. The catalysed reaction is guanosine(1835) in 23S rRNA + S-adenosyl-L-methionine = N(2)-methylguanosine(1835) in 23S rRNA + S-adenosyl-L-homocysteine + H(+). Specifically methylates the guanine in position 1835 (m2G1835) of 23S rRNA. The protein is Ribosomal RNA large subunit methyltransferase G of Pseudomonas syringae pv. syringae (strain B728a).